Here is a 937-residue protein sequence, read N- to C-terminus: Alanine--tRNA ligase (937 aa).

His-626, His-630, Cys-727, and His-731 together coordinate Zn(2+).

The protein belongs to the class-II aminoacyl-tRNA synthetase family. Requires Zn(2+) as cofactor.

The protein localises to the cytoplasm. The catalysed reaction is tRNA(Ala) + L-alanine + ATP = L-alanyl-tRNA(Ala) + AMP + diphosphate. Its function is as follows. Catalyzes the attachment of alanine to tRNA(Ala) in a two-step reaction: alanine is first activated by ATP to form Ala-AMP and then transferred to the acceptor end of tRNA(Ala). Also edits incorrectly charged Ser-tRNA(Ala) and Gly-tRNA(Ala) via its editing domain. This is Alanine--tRNA ligase from Opitutus terrae (strain DSM 11246 / JCM 15787 / PB90-1).